The following is a 239-amino-acid chain: Uridylate kinase (239 aa).

12 to 15 (KLSG) serves as a coordination point for ATP. The interval 20–25 (GDQGYG) is involved in allosteric activation by GTP. G54 contacts UMP. 2 residues coordinate ATP: G55 and R59. UMP-binding positions include D74 and 135–142 (TGNPYFTT). 3 residues coordinate ATP: T162, Y168, and D171.

The protein belongs to the UMP kinase family. As to quaternary structure, homohexamer.

It localises to the cytoplasm. The catalysed reaction is UMP + ATP = UDP + ADP. It participates in pyrimidine metabolism; CTP biosynthesis via de novo pathway; UDP from UMP (UMPK route): step 1/1. Allosterically activated by GTP. Inhibited by UTP. Functionally, catalyzes the reversible phosphorylation of UMP to UDP. In Geobacter metallireducens (strain ATCC 53774 / DSM 7210 / GS-15), this protein is Uridylate kinase.